We begin with the raw amino-acid sequence, 143 residues long: Potassium voltage-gated channel subfamily E regulatory beta subunit 5 (143 aa).

N2 and N25 each carry an N-linked (GlcNAc...) asparagine glycan. Residues 61–81 form a helical membrane-spanning segment; that stretch reads LYILLIMIFYACLAGGLILAY. The Cytoplasmic portion of the chain corresponds to 82–143; that stretch reads TRSRKLVEAK…PALAQGAERV (62 aa).

It belongs to the potassium channel KCNE family. Interacts with KCNQ1; impairs KCNQ1 localization in lipid rafts and only conducts current upon strong and continued depolarization. Detected in embryonal dorsal root and nerve ganglia, in the somites and in myoepicardial layer of the developing heart wall. Detected at lower levels in the central nervous system (CNS) and in developing limb.

Its subcellular location is the membrane. Its function is as follows. Potassium channel ancillary subunit that is essential for generation of some native K(+) currents by virtue of formation of heteromeric ion channel complex with voltage-gated potassium (Kv) channel pore-forming alpha subunits. Functions as an inhibitory beta-subunit of the repolarizing cardiac potassium ion channel KCNQ1. This is Potassium voltage-gated channel subfamily E regulatory beta subunit 5 (Kcne5) from Mus musculus (Mouse).